Reading from the N-terminus, the 318-residue chain is Basic leucine zipper (bZIP) transcription factor atfB (318 aa).

Residues 114-157 (FNSSPPEYAPPKHRSSLSEQSQTDGYGVSTRRRKASAIDQCEQQ) form a disordered region. The tract at residues 160–199 (REKREKFLERNRLAASKCRQKKKEHTKLLETRFREVSNKK) is basic motif. Residues 160 to 223 (REKREKFLER…LNLKNEMLRH (64 aa)) enclose the bZIP domain. The interval 202–216 (LESEIEHLRSEVLNL) is leucine-zipper. A disordered region spans residues 275-301 (DGPMQLPSEMGSPLDQRRDSEQSIMTE).

The protein belongs to the bZIP family. ATF subfamily.

It localises to the nucleus. Its function is as follows. Transcription factor that acts as a key player in the regulatory circuit that integrates secondary metabolism and cellular response to oxidative stress. Regulates the genes involved in development and stress response through direct binding to their promoters. Particularly involved in the resistance to oxidative stress in asexual conidiospores. This is Basic leucine zipper (bZIP) transcription factor atfB from Aspergillus oryzae (strain ATCC 42149 / RIB 40) (Yellow koji mold).